The chain runs to 104 residues: Large ribosomal subunit protein uL24 (104 aa).

This sequence belongs to the universal ribosomal protein uL24 family. As to quaternary structure, part of the 50S ribosomal subunit.

Its function is as follows. One of two assembly initiator proteins, it binds directly to the 5'-end of the 23S rRNA, where it nucleates assembly of the 50S subunit. In terms of biological role, one of the proteins that surrounds the polypeptide exit tunnel on the outside of the subunit. The polypeptide is Large ribosomal subunit protein uL24 (Klebsiella pneumoniae (strain 342)).